Consider the following 416-residue polypeptide: Choline/ethanolaminephosphotransferase 1 (416 aa).

The interval 1–20 is disordered; that stretch reads MSGHRSTRKRCGDSHPESPV. Serine 18 is modified (phosphoserine). Threonine 40 is subject to Phosphothreonine. Position 86 (asparagine 86) interacts with CDP-choline. The next 2 membrane-spanning stretches (helical) occupy residues 89–108 and 116–133; these read TIIGLSINICTTILLVFYCP and LWAYIACACGLFIYQSLD. Position 133 (aspartate 133) interacts with Mg(2+). Residue asparagine 144 is glycosylated (N-linked (GlcNAc...) asparagine). Residue glutamate 151 participates in CDP-choline binding. Aspartate 154 is a Mg(2+) binding site. Residue histidine 155 is the Proton acceptor of the active site. Transmembrane regions (helical) follow at residues 156–176, 180–199, 210–230, 246–267, 286–306, 315–334, 349–363, and 368–388; these read GCDSLSTVFVVLGTCIAVQLG, DWMFFCCFAGTFMFYCAHWQ, IIDVTEVQIFIIIMHLLAVIG, MKLLPALCTVAGTIFSCTNYFR, VLSPFLHIGSVITLAVMIYKK, HPCLYILTFGFVSAKITNKL, TAFIGPALLFLDQYF, and DEYIVLWIALIFSFFDLIRYC. Aspartate 158 lines the Mg(2+) pocket.

It belongs to the CDP-alcohol phosphatidyltransferase class-I family. As to quaternary structure, homodimer. The cofactor is Mg(2+). Requires Mn(2+) as cofactor.

It is found in the endoplasmic reticulum membrane. Its subcellular location is the nucleus membrane. The catalysed reaction is CDP-ethanolamine + a 1,2-diacyl-sn-glycerol = a 1,2-diacyl-sn-glycero-3-phosphoethanolamine + CMP + H(+). It catalyses the reaction CDP-choline + a 1,2-diacyl-sn-glycerol = a 1,2-diacyl-sn-glycero-3-phosphocholine + CMP + H(+). It carries out the reaction 1-O-alkyl-2-acyl-sn-glycerol + CDP-choline = a 1-O-alkyl-2-acyl-sn-glycero-3-phosphocholine + CMP + H(+). The enzyme catalyses a 1-O-(1Z-alkenyl)-2-acyl-sn-glycerol + CDP-choline = a 1-O-(1Z-alkenyl)-2-acyl-sn-glycero-3-phosphocholine + CMP + H(+). The catalysed reaction is 1,2-dioctanoyl-sn-glycerol + CDP-choline = 1,2-dioctanoyl-sn-glycero-3-phosphocholine + CMP + H(+). It catalyses the reaction 1,2-didecanoyl-sn-glycerol + CDP-choline = 1,2-didecanoyl-sn-glycero-3-phosphocholine + CMP + H(+). It carries out the reaction CDP-choline + 1,2-di-(9Z-octadecenoyl)-sn-glycerol = 1,2-di-(9Z-octadecenoyl)-sn-glycero-3-phosphocholine + CMP + H(+). The enzyme catalyses 1-hexadecanoyl-2-(9Z-octadecenoyl)-sn-glycerol + CDP-choline = 1-hexadecanoyl-2-(9Z-octadecenoyl)-sn-glycero-3-phosphocholine + CMP + H(+). The catalysed reaction is CDP-ethanolamine + 1,2-di-(9Z-octadecenoyl)-sn-glycerol = 1,2-di-(9Z-octadecenoyl)-sn-glycero-3-phosphoethanolamine + CMP + H(+). It catalyses the reaction 1-hexadecanoyl-2-(9Z-octadecenoyl)-sn-glycerol + CDP-ethanolamine = 1-hexadecanoyl-2-(9Z-octadecenoyl)-sn-glycero-3-phosphoethanolamine + CMP + H(+). It carries out the reaction 1-hexadecanoyl-2-(4Z,7Z,10Z,13Z,16Z,19Z-docosahexaenoyl)-sn-glycerol + CDP-choline = 1-hexadecanoyl-2-(4Z,7Z,10Z,13Z,16Z,19Z-docosahexaenoyl)-sn-glycero-3-phosphocholine + CMP + H(+). The enzyme catalyses 1,2-di-(9Z-hexadecenoyl)-sn-glycerol + CDP-choline = 1,2-di-(9Z-hexadecenoyl)-sn-glycero-3-phosphocholine + CMP + H(+). The catalysed reaction is 1,2-di-(9Z-hexadecenoyl)-sn-glycerol + CDP-ethanolamine = 1,2-di-(9Z-hexadecenoyl)-sn-glycero-3-phosphoethanolamine + CMP + H(+). It catalyses the reaction 1-O-hexadecyl-2-acetyl-sn-glycerol + CDP-choline = 1-O-hexadecyl-2-acetyl-sn-glycero-3-phosphocholine + CMP + H(+). It carries out the reaction 1-O-hexadecyl-2-(5Z,8Z,11Z,14Z-eicosatetraenoyl)-sn-glycerol + CDP-choline = 1-O-hexadecyl-2-(5Z,8Z,11Z,14Z)-eicosatetraenoyl-sn-glycero-3-phosphocholine + CMP + H(+). It functions in the pathway phospholipid metabolism; phosphatidylethanolamine biosynthesis; phosphatidylethanolamine from ethanolamine: step 3/3. The protein operates within phospholipid metabolism; phosphatidylcholine biosynthesis; phosphatidylcholine from phosphocholine: step 2/2. Catalyzes both phosphatidylcholine and phosphatidylethanolamine biosynthesis from CDP-choline and CDP-ethanolamine, respectively. Involved in protein-dependent process of phospholipid transport to distribute phosphatidyl choline to the lumenal surface. Has a higher cholinephosphotransferase activity than ethanolaminephosphotransferase activity. The protein is Choline/ethanolaminephosphotransferase 1 of Mus musculus (Mouse).